A 239-amino-acid chain; its full sequence is Small ribosomal subunit protein uS3 (239 aa).

The KH type-2 domain maps to 39–109; sequence IRAMIQEIPE…KVQIKIKEVK (71 aa). Residues 219–239 are disordered; that stretch reads GALLKKQRRPRTEKPAQAGRQ.

It belongs to the universal ribosomal protein uS3 family. Part of the 30S ribosomal subunit. Forms a tight complex with proteins S10 and S14.

In terms of biological role, binds the lower part of the 30S subunit head. Binds mRNA in the 70S ribosome, positioning it for translation. The sequence is that of Small ribosomal subunit protein uS3 from Treponema denticola (strain ATCC 35405 / DSM 14222 / CIP 103919 / JCM 8153 / KCTC 15104).